The following is a 70-amino-acid chain: Protein SlyX homolog (70 aa).

Belongs to the SlyX family.

The protein is Protein SlyX homolog of Rhizobium meliloti (strain 1021) (Ensifer meliloti).